Consider the following 215-residue polypeptide: Fibrillarin-like rRNA/tRNA 2'-O-methyltransferase (215 aa).

Residues 1-29 (MKASSSLPDGVQRRQFDNRSRLTTHGTTV) are disordered. The segment covering 11–20 (VQRRQFDNRS) has biased composition (basic and acidic residues). Residues 76 to 77 (TT), 92 to 93 (EF), 117 to 118 (DA), and 138 to 141 (DVAT) contribute to the S-adenosyl-L-methionine site.

The protein belongs to the methyltransferase superfamily. Fibrillarin family. As to quaternary structure, interacts with nop5. Component of box C/D small ribonucleoprotein (sRNP) particles that contain rpl7ae, FlpA and nop5, plus a guide RNA.

Involved in pre-rRNA and tRNA processing. Utilizes the methyl donor S-adenosyl-L-methionine to catalyze the site-specific 2'-hydroxyl methylation of ribose moieties in rRNA and tRNA. Site specificity is provided by a guide RNA that base pairs with the substrate. Methylation occurs at a characteristic distance from the sequence involved in base pairing with the guide RNA. The polypeptide is Fibrillarin-like rRNA/tRNA 2'-O-methyltransferase (Haloquadratum walsbyi (strain DSM 16790 / HBSQ001)).